A 668-amino-acid polypeptide reads, in one-letter code: Auxilin-like clathrin uncoating factor SWA2 (668 aa).

The segment at 1–95 (MSDPFAHLLT…ANNTPPSALA (95 aa)) is disordered. A CB1 region spans residues 1–100 (MSDPFAHLLT…PSALANTDDD (100 aa)). The span at 17–36 (SASASKETTPQSSNSPSITG) shows a compositional bias: polar residues. S52 and S64 each carry phosphoserine. The segment covering 76-92 (PTNSTTKSNTANNTPPS) has biased composition (low complexity). The UBA domain maps to 140-180 (DEVKDMEIARLMSLGLSIEEATEFYENDVTYERYLEILKSK). Positions 238 to 302 (EANDRLNNYS…FETKIDITKR (65 aa)) are CB2. S264, S308, and S312 each carry phosphoserine. 2 disordered regions span residues 302–323 (RTAPDVSHSSSPTSGILIEENS) and 339–359 (EGNLTNSKSNEDSTLFNENSN). Positions 303–362 (TAPDVSHSSSPTSGILIEENSRRNEPLIEDSLLDFSEGNLTNSKSNEDSTLFNENSNTDS) are CB3. Residues 340 to 359 (GNLTNSKSNEDSTLFNENSN) are compositionally biased toward polar residues. TPR repeat units follow at residues 374–407 (YNEFKAKGTSLFKNGDYINSLQEYEKSLNTLPLN), 412–445 (IIALSNIIASQLKIGEYSKSIENSSMALELFPSS), and 467–500 (PKIMIRRAESFEHLESFKKALETYQELIKKNFFD). The disordered stretch occupies residues 511 to 556 (QDFINPPPVKKSMPVKKKTTTTSPATKKQNLTASSSNSPISVDSTS). The span at 539–555 (QNLTASSSNSPISVDST) shows a compositional bias: polar residues. In terms of domain architecture, J spans 603–668 (CNWKDVSMQD…DKFKLQNDIN (66 aa)).

In terms of assembly, interacts with the clathrin light and heavy chains CLC1 and CHC1, respectively. Binds to clathrin with its N-terminal domain containing 3 clathrin-binding (CB) motifs. Association with clathrin is transient. Binds to polyubiquitin and ubiquitinated proteins.

The protein resides in the cytoplasm. The protein localises to the endoplasmic reticulum membrane. Functionally, cofactor for the uncoating of clathrin-coated vesicles (CCVs) by Hsp70-type chaperones (SSA1/2/3 and SSB1/2). Coat disassembly is important for fusion of vesicles with target membranes and for recycling components of clathrin coats to the cytoplasm for further rounds of vesicle formation. Binds to assembled clathrin and recruits the ATP-activated chaperone to CCVs. Stimulates the ATPase activity of the clathrin-associated Hsp70-type chaperone SSA1, which then disrupts clathrin-clathrin interactions, leading to release of the clathrin coat. In addition, prevents unproductive clathrin assembly in the cell. Also required for cortical endoplasmic reticulum inheritance. The polypeptide is Auxilin-like clathrin uncoating factor SWA2 (SWA2) (Saccharomyces cerevisiae (strain ATCC 204508 / S288c) (Baker's yeast)).